Consider the following 142-residue polypeptide: Hemoglobin subunit alpha-3 (142 aa).

In terms of domain architecture, Globin spans 2–142; the sequence is TLTDSDKAAV…VATVLTSKYR (141 aa). His-59 provides a ligand contact to O2. A heme b-binding site is contributed by His-88.

Belongs to the globin family. In terms of assembly, heterotetramer of two alpha chains and two beta chains. In terms of tissue distribution, red blood cells.

In terms of biological role, this is a larval (tadpole) alpha-globin. The protein is Hemoglobin subunit alpha-3 (hba3) of Xenopus laevis (African clawed frog).